Consider the following 876-residue polypeptide: Alanine--tRNA ligase (876 aa).

Residues His-564, His-568, Cys-666, and His-670 each contribute to the Zn(2+) site.

It belongs to the class-II aminoacyl-tRNA synthetase family. It depends on Zn(2+) as a cofactor.

The protein localises to the cytoplasm. The enzyme catalyses tRNA(Ala) + L-alanine + ATP = L-alanyl-tRNA(Ala) + AMP + diphosphate. Its function is as follows. Catalyzes the attachment of alanine to tRNA(Ala) in a two-step reaction: alanine is first activated by ATP to form Ala-AMP and then transferred to the acceptor end of tRNA(Ala). Also edits incorrectly charged Ser-tRNA(Ala) and Gly-tRNA(Ala) via its editing domain. In Porphyromonas gingivalis (strain ATCC BAA-308 / W83), this protein is Alanine--tRNA ligase.